A 412-amino-acid polypeptide reads, in one-letter code: Argininosuccinate synthase (412 aa).

Residues A10 to S18 and A36 contribute to the ATP site. L-citrulline contacts are provided by Y87 and S92. Residue S115–N123 participates in ATP binding. T119, N123, and D124 together coordinate L-aspartate. N123 contacts L-citrulline. 5 residues coordinate L-citrulline: R127, S180, S189, E270, and Y282.

This sequence belongs to the argininosuccinate synthase family. As to quaternary structure, homotetramer.

It catalyses the reaction L-citrulline + L-aspartate + ATP = 2-(N(omega)-L-arginino)succinate + AMP + diphosphate + H(+). Its pathway is amino-acid biosynthesis; L-arginine biosynthesis; L-arginine from L-ornithine and carbamoyl phosphate: step 2/3. It functions in the pathway nitrogen metabolism; urea cycle; (N(omega)-L-arginino)succinate from L-aspartate and L-citrulline: step 1/1. The polypeptide is Argininosuccinate synthase (Aedes aegypti (Yellowfever mosquito)).